Reading from the N-terminus, the 275-residue chain is Ribosomal RNA small subunit methyltransferase A (275 aa).

S-adenosyl-L-methionine-binding residues include asparagine 15, leucine 17, glycine 42, glutamate 63, aspartate 88, and asparagine 111.

The protein belongs to the class I-like SAM-binding methyltransferase superfamily. rRNA adenine N(6)-methyltransferase family. RsmA subfamily.

The protein resides in the cytoplasm. The catalysed reaction is adenosine(1518)/adenosine(1519) in 16S rRNA + 4 S-adenosyl-L-methionine = N(6)-dimethyladenosine(1518)/N(6)-dimethyladenosine(1519) in 16S rRNA + 4 S-adenosyl-L-homocysteine + 4 H(+). Its function is as follows. Specifically dimethylates two adjacent adenosines (A1518 and A1519) in the loop of a conserved hairpin near the 3'-end of 16S rRNA in the 30S particle. May play a critical role in biogenesis of 30S subunits. In Geobacter metallireducens (strain ATCC 53774 / DSM 7210 / GS-15), this protein is Ribosomal RNA small subunit methyltransferase A.